The sequence spans 118 residues: MALLPRLAAGGLLLLLALAALDGKPAPPKLLQKLMDGGQRRSEDQAAAGRIIDYEDGDEPVAVSVGDTKQAARALSPLRKPQPLCSCTDMSDLECMNFCHKDVIWINRNRKPSPIQSS.

A signal peptide spans 1–23 (MALLPRLAAGGLLLLLALAALDG). A propeptide spanning residues 24 to 84 (KPAPPKLLQK…LSPLRKPQPL (61 aa)) is cleaved from the precursor. 2 disulfides stabilise this stretch: C85–C99 and C87–C95. A propeptide spanning residues 112–118 (PSPIQSS) is cleaved from the precursor.

The protein belongs to the endothelin/sarafotoxin family. In terms of processing, different length molecules ranging from 15 (85-99) to 30 amino acids (85-114) have been found in the venom. In terms of tissue distribution, expressed by the venom gland.

The protein resides in the secreted. Vasoconstrictor activity. These toxins cause cardiac arrest probably as a result of coronary vasospasm. Functionally, sarafotoxin-i3: vasoconstrictor activity. Causes cardiac arrest probably as a result of coronary vasospasm. Displays low agonistic activities towards endothelin-2 receptor (EDNRB) (displays affinity in the micromolar range). The chain is Sarafotoxin-i1 from Atractaspis irregularis (Variable burrowing asp).